The following is a 226-amino-acid chain: DNA mismatch repair protein MutH (226 aa).

This sequence belongs to the MutH family.

The protein localises to the cytoplasm. In terms of biological role, sequence-specific endonuclease that cleaves unmethylated GATC sequences. It is involved in DNA mismatch repair. This Haemophilus ducreyi (strain 35000HP / ATCC 700724) protein is DNA mismatch repair protein MutH.